A 371-amino-acid chain; its full sequence is Flagellar P-ring protein (371 aa).

The first 25 residues, 1-25 (MKMRACKWLLTLAVAFAATLSSAYA), serve as a signal peptide directing secretion.

It belongs to the FlgI family. In terms of assembly, the basal body constitutes a major portion of the flagellar organelle and consists of four rings (L,P,S, and M) mounted on a central rod.

It localises to the periplasm. The protein localises to the bacterial flagellum basal body. Functionally, assembles around the rod to form the L-ring and probably protects the motor/basal body from shearing forces during rotation. This is Flagellar P-ring protein from Sinorhizobium medicae (strain WSM419) (Ensifer medicae).